The sequence spans 313 residues: tRNA dimethylallyltransferase (313 aa).

Residue 10-17 coordinates ATP; that stretch reads GPTAVGKT. 12 to 17 contributes to the substrate binding site; that stretch reads TAVGKT. The interaction with substrate tRNA stretch occupies residues 35-38; sequence DSMQ.

This sequence belongs to the IPP transferase family. As to quaternary structure, monomer. Requires Mg(2+) as cofactor.

It catalyses the reaction adenosine(37) in tRNA + dimethylallyl diphosphate = N(6)-dimethylallyladenosine(37) in tRNA + diphosphate. Functionally, catalyzes the transfer of a dimethylallyl group onto the adenine at position 37 in tRNAs that read codons beginning with uridine, leading to the formation of N6-(dimethylallyl)adenosine (i(6)A). This Alkaliphilus oremlandii (strain OhILAs) (Clostridium oremlandii (strain OhILAs)) protein is tRNA dimethylallyltransferase.